Reading from the N-terminus, the 338-residue chain is MVGTAEGGAERAVRRWVDAAGGRLVLDGGLATELEANGADLNDPLWSAKCLLSSPHLIRKVHMDYLEAGANIIITASYQATIQGFESKGFSKEQSENLLTKSVQIALEAREMFLKEHLEKSTPIQHPILVAAALGSYGAYLADGSEYSGDYGEAGTKEFLKDFHRRRLQVLAEAGPDLIAFETIPNKLEAQAYVELLEECNINIPSWLSFNSKDGVHVVSGDSLIECATIADKCAKVGAVGINCTPPRFIHGLILSIRKVTDKPILIYPNSGERYDGEKKEWVESTGVSDGDFVSYVNEWCKDGAALIGGCCRTTPNTIRAIHRTLNQGCHKHQLPVA.

The region spanning 12–326 (AVRRWVDAAG…NTIRAIHRTL (315 aa)) is the Hcy-binding domain. Residues C244, C311, and C312 each coordinate Zn(2+).

In terms of assembly, monomer. The cofactor is Zn(2+).

The catalysed reaction is S-methyl-L-methionine + L-homocysteine = 2 L-methionine + H(+). Catalyzes methyl transfer from S-methylmethionine (SMM) to adenosyl-L-homocysteine (AdoMet). SMM degradation (by HMT-1, HMT-2, HMT-3 and HMT-4) and biosynthesis (by MMT1) constitute the SMM cycle in plants, which is probably required to achieve short term control of AdoMet level. The sequence is that of Homocysteine S-methyltransferase 3 (HMT-3) from Zea mays (Maize).